Consider the following 246-residue polypeptide: Probable hydroxyethylthiazole kinase (246 aa).

Methionine 50 contributes to the substrate binding site. ATP-binding residues include arginine 125 and threonine 145. Glycine 172 is a binding site for substrate.

This sequence belongs to the Thz kinase family. It depends on Mg(2+) as a cofactor.

It catalyses the reaction 5-(2-hydroxyethyl)-4-methylthiazole + ATP = 4-methyl-5-(2-phosphooxyethyl)-thiazole + ADP + H(+). Its pathway is cofactor biosynthesis; thiamine diphosphate biosynthesis; 4-methyl-5-(2-phosphoethyl)-thiazole from 5-(2-hydroxyethyl)-4-methylthiazole: step 1/1. Catalyzes the phosphorylation of the hydroxyl group of 4-methyl-5-beta-hydroxyethylthiazole (THZ). The sequence is that of Probable hydroxyethylthiazole kinase (thiM) from Agrobacterium fabrum (strain C58 / ATCC 33970) (Agrobacterium tumefaciens (strain C58)).